The primary structure comprises 470 residues: 3-isopropylmalate dehydratase large subunit (470 aa).

[4Fe-4S] cluster-binding residues include Cys348, Cys409, and Cys412.

Belongs to the aconitase/IPM isomerase family. LeuC type 1 subfamily. Heterodimer of LeuC and LeuD. [4Fe-4S] cluster serves as cofactor.

It catalyses the reaction (2R,3S)-3-isopropylmalate = (2S)-2-isopropylmalate. It functions in the pathway amino-acid biosynthesis; L-leucine biosynthesis; L-leucine from 3-methyl-2-oxobutanoate: step 2/4. Catalyzes the isomerization between 2-isopropylmalate and 3-isopropylmalate, via the formation of 2-isopropylmaleate. This chain is 3-isopropylmalate dehydratase large subunit, found in Acidithiobacillus ferrooxidans (strain ATCC 23270 / DSM 14882 / CIP 104768 / NCIMB 8455) (Ferrobacillus ferrooxidans (strain ATCC 23270)).